The primary structure comprises 308 residues: Acetyl-coenzyme A carboxylase carboxyl transferase subunit beta (308 aa).

The region spanning 25 to 294 (VWTKCTSCEQ…PLVVSVNDSP (270 aa)) is the CoA carboxyltransferase N-terminal domain. 4 residues coordinate Zn(2+): Cys29, Cys32, Cys48, and Cys51. The segment at 29 to 51 (CTSCEQVLYHAELERNLEVCPKC) adopts a C4-type zinc-finger fold.

This sequence belongs to the AccD/PCCB family. In terms of assembly, acetyl-CoA carboxylase is a heterohexamer composed of biotin carboxyl carrier protein (AccB), biotin carboxylase (AccC) and two subunits each of ACCase subunit alpha (AccA) and ACCase subunit beta (AccD). Zn(2+) serves as cofactor.

Its subcellular location is the cytoplasm. The catalysed reaction is N(6)-carboxybiotinyl-L-lysyl-[protein] + acetyl-CoA = N(6)-biotinyl-L-lysyl-[protein] + malonyl-CoA. It participates in lipid metabolism; malonyl-CoA biosynthesis; malonyl-CoA from acetyl-CoA: step 1/1. In terms of biological role, component of the acetyl coenzyme A carboxylase (ACC) complex. Biotin carboxylase (BC) catalyzes the carboxylation of biotin on its carrier protein (BCCP) and then the CO(2) group is transferred by the transcarboxylase to acetyl-CoA to form malonyl-CoA. In Vibrio vulnificus (strain CMCP6), this protein is Acetyl-coenzyme A carboxylase carboxyl transferase subunit beta.